Consider the following 160-residue polypeptide: SsrA-binding protein (160 aa).

The protein belongs to the SmpB family.

The protein localises to the cytoplasm. Functionally, required for rescue of stalled ribosomes mediated by trans-translation. Binds to transfer-messenger RNA (tmRNA), required for stable association of tmRNA with ribosomes. tmRNA and SmpB together mimic tRNA shape, replacing the anticodon stem-loop with SmpB. tmRNA is encoded by the ssrA gene; the 2 termini fold to resemble tRNA(Ala) and it encodes a 'tag peptide', a short internal open reading frame. During trans-translation Ala-aminoacylated tmRNA acts like a tRNA, entering the A-site of stalled ribosomes, displacing the stalled mRNA. The ribosome then switches to translate the ORF on the tmRNA; the nascent peptide is terminated with the 'tag peptide' encoded by the tmRNA and targeted for degradation. The ribosome is freed to recommence translation, which seems to be the essential function of trans-translation. This is SsrA-binding protein from Shewanella amazonensis (strain ATCC BAA-1098 / SB2B).